The following is a 4194-amino-acid chain: Hybrid PKS-NRPS synthetase pydA (4194 aa).

One can recognise a Ketosynthase family 3 (KS3) domain in the interval 14–450 (REPIAVVGSG…GTNAHAIVEN (437 aa)). Catalysis depends on for beta-ketoacyl synthase activity residues Cys-187, His-326, and His-370. The region spanning 565–887 (VFTGQGAQWA…QRGKDDVQAF (323 aa)) is the Malonyl-CoA:ACP transacylase (MAT) domain. Residues 953–1088 (HPLLGTRTTD…GRVIVITGEA (136 aa)) form an N-terminal hotdog fold region. Residues 953 to 1257 (HPLLGTRTTD…VVSFSEPTAE (305 aa)) enclose the PKS/mFAS DH domain. His-985 acts as the Proton acceptor; for dehydratase activity in catalysis. A C-terminal hotdog fold region spans residues 1103–1257 (LVDIPEDRFY…VVSFSEPTAE (155 aa)). Asp-1163 (proton donor; for dehydratase activity) is an active-site residue. The segment at 1302 to 1596 (YMRQLASLFP…FSGVDSTTHE (295 aa)) is methyltransferase (cMeT) domain. One can recognise a Ketoreductase (KR) domain in the interval 2141 to 2314 (TYVFFGLTSD…AGSILHIGAV (174 aa)). A Carrier 1 domain is found at 2421–2505 (TTAEEALEIV…ELVEFAVENM (85 aa)). O-(pantetheine 4'-phosphoryl)serine is present on Ser-2465. The interval 2512–2583 (NMSDSLNAVP…ERDSSTASLE (72 aa)) is disordered. The span at 2526–2547 (APVIPASPPSGSVSSAPSSDPP) shows a compositional bias: low complexity. The segment covering 2550–2565 (TAETSQHLSESSSKTS) has biased composition (polar residues). Positions 2566–2577 (QPDEKQSEERDS) are enriched in basic and acidic residues. Residues 2591–3023 (EKVLPVSPGQ…QILKDVSLFT (433 aa)) form a condensation region. The adenylation stretch occupies residues 3056–3467 (ANPPQEIALR…RIEGDTQIKL (412 aa)). Residues 3580 to 3660 (TQLTEAESEL…AMAAVIQDLS (81 aa)) enclose the Carrier 2 domain. Ser-3620 bears the O-(pantetheine 4'-phosphoryl)serine mark. The Thioester reductase (TE) domain occupies 3701–3920 (ITGATGFLGK…VDLISVERAA (220 aa)). Disordered regions lie at residues 4031–4110 (RRDK…DEQI) and 4163–4194 (KGEY…EPDD). A compositionally biased stretch (basic and acidic residues) spans 4057-4072 (RGRDVSPRHPALDHPD). A compositionally biased stretch (acidic residues) spans 4174 to 4183 (EEAEEAEWQC). A compositionally biased stretch (basic and acidic residues) spans 4184 to 4194 (DEGHGDGEPDD).

This sequence in the C-terminal section; belongs to the NRP synthetase family. It depends on pantetheine 4'-phosphate as a cofactor.

Its pathway is mycotoxin biosynthesis. Hybrid PKS-NRPS synthetase; part of the gene cluster that mediates the biosynthesis of pyrrocidines, fungal natural products containing a macrocyclic para-cyclophane connected to a decahydrofluorene ring system that show potent antibiotic activities toward Gram-negative bacteria. Within the pathway, the PKS-NRPS pydA, with the help of the trans-enoyl reductase pydC, synthesize the polyketide-tyrosyl acyl thioester product which can be reductively off-loaded by the terminal reductase (R) domain in pydA. The PKS module of pydA acts in combination with the trans-acting enoyl reductase pydC to produce a methylated polyketide attached to the ACP domain. In parallel, the adenylation (A) domain of the NRPS module activated L-tyrosine, which is then transferred to the ACP domain. The condensation (C) domain subsequently link this group to the polyketide chain, forming an enzyme-bound amide. The alpha/beta hydrolase pydG is then required to catalyze the subsequent Knoevenagel condensation that affords the 3-pyrrolin-2-one ring, whereas the four proteins pydB, pydE, pydX and pydZ then function synergistically to form the cyclophane. PydB and the membrane-bound pydX and pydZ are lipid-binding proteins that can sequester and mold the pdyG product into the inverse S-shape. Binding of the medium chain reductase pydE to the complex would trigger the cascade oxidative cyclization. PydY is involved in the Diels-Alder cycloaddition that forms the decahydrofluorene core. Additional non-enzymatic hydroxylation yields pyrrocidine A2 which can be further reduced into pyrrocidine B by an endogenous reductase. This chain is Hybrid PKS-NRPS synthetase pydA, found in Acremonium sp.